The chain runs to 452 residues: MANTFKYYPETMGNSSGYPISLPFPKGSATSAVNVARQLPKYLGHVPSQSVHTQLPSMASLGYFNQPSSTYYAPPAPLQQHQQPPILPPPGLMYTSNNNSNVIPPPVQMIRDGQQQPQQSNQVNGGVSENLDYDISIMSKFIMENAFVAFNANYSTDDQTTDLFFKGISSVLNATRLPSATIFLAIDYLFKYINKLSNGIHSIGGNSINIIYQNTMIAFILANKFNDDKTFTNNSWSQATGILINVINDFERQWLRIFNWELYDSAFLYFEFVKNFEIFKQNQLKPAVAVPTLLSPIVNVGDTRNVNFNLKPTSTNNLLSPVSNYETPMLMPHNMFSSPSYQSNSRSEFSSMNGYYNYYNYNQPRLNYYQQFPNIYSSPISETQFDYDFYNFSSQQQQQQQKQHSLLPAAPQLPPPHVHNQSYGHHLGWKSMDDTINHSRFERNYFPYSAVY.

Belongs to the cyclin family. PCL1,2 subfamily. Forms a cyclin-CDK complex with PHO85.

In terms of biological role, cyclin partner of the cyclin-dependent kinase (CDK) PHO85. Has a role in cell integrity and polarized cell growth together with the other PCL1/PCL2 cyclin family members. This Saccharomyces cerevisiae (strain ATCC 204508 / S288c) (Baker's yeast) protein is PHO85 cyclin CLG1 (CLG1).